The chain runs to 278 residues: Elongation factor Ts (278 aa).

Residues 82-85 (TDFV) form an involved in Mg(2+) ion dislocation from EF-Tu region.

It belongs to the EF-Ts family.

It is found in the cytoplasm. In terms of biological role, associates with the EF-Tu.GDP complex and induces the exchange of GDP to GTP. It remains bound to the aminoacyl-tRNA.EF-Tu.GTP complex up to the GTP hydrolysis stage on the ribosome. This Streptomyces avermitilis (strain ATCC 31267 / DSM 46492 / JCM 5070 / NBRC 14893 / NCIMB 12804 / NRRL 8165 / MA-4680) protein is Elongation factor Ts.